The sequence spans 377 residues: Chorismate synthase (377 aa).

Residues Arg-48 and Arg-54 each contribute to the NADP(+) site. FMN contacts are provided by residues 125–127, 238–239, Gly-278, 293–297, and Arg-319; these read RSS, NA, and KPTSS.

The protein belongs to the chorismate synthase family. As to quaternary structure, homotetramer. FMNH2 serves as cofactor.

It catalyses the reaction 5-O-(1-carboxyvinyl)-3-phosphoshikimate = chorismate + phosphate. It functions in the pathway metabolic intermediate biosynthesis; chorismate biosynthesis; chorismate from D-erythrose 4-phosphate and phosphoenolpyruvate: step 7/7. Functionally, catalyzes the anti-1,4-elimination of the C-3 phosphate and the C-6 proR hydrogen from 5-enolpyruvylshikimate-3-phosphate (EPSP) to yield chorismate, which is the branch point compound that serves as the starting substrate for the three terminal pathways of aromatic amino acid biosynthesis. This reaction introduces a second double bond into the aromatic ring system. The chain is Chorismate synthase from Aromatoleum aromaticum (strain DSM 19018 / LMG 30748 / EbN1) (Azoarcus sp. (strain EbN1)).